Here is a 636-residue protein sequence, read N- to C-terminus: DNA-directed RNA polymerase III subunit RPC3 (636 aa).

Residues 366-385 form a disordered region; that stretch reads SMQRRSQERSTHQGQSHKRL. The interval 563-584 is leucine-zipper; it reads LAWNIANSIHKTEILKEENFTL.

Belongs to the RNA polymerase beta chain family. In terms of assembly, component of the RNA polymerase III (Pol III) complex consisting of 17 subunits.

It is found in the nucleus. DNA-dependent RNA polymerase catalyzes the transcription of DNA into RNA using the four ribonucleoside triphosphates as substrates. Specific core component of RNA polymerase III which synthesizes small RNAs, such as 5S rRNA and tRNAs. The sequence is that of DNA-directed RNA polymerase III subunit RPC3 (RPC82) from Eremothecium gossypii (strain ATCC 10895 / CBS 109.51 / FGSC 9923 / NRRL Y-1056) (Yeast).